Consider the following 358-residue polypeptide: Nicotinate-nucleotide--dimethylbenzimidazole phosphoribosyltransferase (358 aa).

Glu-314 (proton acceptor) is an active-site residue.

Belongs to the CobT family.

The catalysed reaction is 5,6-dimethylbenzimidazole + nicotinate beta-D-ribonucleotide = alpha-ribazole 5'-phosphate + nicotinate + H(+). It participates in nucleoside biosynthesis; alpha-ribazole biosynthesis; alpha-ribazole from 5,6-dimethylbenzimidazole: step 1/2. In terms of biological role, catalyzes the synthesis of alpha-ribazole-5'-phosphate from nicotinate mononucleotide (NAMN) and 5,6-dimethylbenzimidazole (DMB). In Mycobacterium ulcerans (strain Agy99), this protein is Nicotinate-nucleotide--dimethylbenzimidazole phosphoribosyltransferase.